Here is a 355-residue protein sequence, read N- to C-terminus: MTLRLADMTELLADKVQAELLGNSELLIERLSTLEAAGPNDLAFLSHPKYLGQLAQSAAGCVIVAPSAREAALKRGPCIVVDDPYYYFALVTQLWKRQHFPGAAPAIHASACIDPAAIISPHVSIGAFACIAAGAVIGEGARIAEHCVIGANAIVGANSRLSARVTVADDCRIGERCIIHPGAVIGADGFGFAPHDGQWVKIEQLGAVRIGNDVEIGANTCIDRGALQDTVIEDGVKLDNLVQIAHNVRVGRHSAMAGCAGVAGSATIGAHCTVGGGAIVLGHLRLADGVHVSAASIVTRSLLKPGHYTGLFPIDDNAAWEKNAATLKQLHALRERLKQTEKSLLQLQGSLEEKP.

His246 (proton acceptor) is an active-site residue.

It belongs to the transferase hexapeptide repeat family. LpxD subfamily. Homotrimer.

It carries out the reaction a UDP-3-O-[(3R)-3-hydroxyacyl]-alpha-D-glucosamine + a (3R)-hydroxyacyl-[ACP] = a UDP-2-N,3-O-bis[(3R)-3-hydroxyacyl]-alpha-D-glucosamine + holo-[ACP] + H(+). The protein operates within bacterial outer membrane biogenesis; LPS lipid A biosynthesis. Functionally, catalyzes the N-acylation of UDP-3-O-acylglucosamine using 3-hydroxyacyl-ACP as the acyl donor. Is involved in the biosynthesis of lipid A, a phosphorylated glycolipid that anchors the lipopolysaccharide to the outer membrane of the cell. In Polaromonas naphthalenivorans (strain CJ2), this protein is UDP-3-O-acylglucosamine N-acyltransferase.